Consider the following 144-residue polypeptide: Ribosome-binding factor A (144 aa).

Residues 120–144 (DKRRMAESGREEDDAAPDETTEDNA) form a disordered region. Over residues 129-144 (REEDDAAPDETTEDNA) the composition is skewed to acidic residues.

Belongs to the RbfA family. As to quaternary structure, monomer. Binds 30S ribosomal subunits, but not 50S ribosomal subunits or 70S ribosomes.

The protein resides in the cytoplasm. Functionally, one of several proteins that assist in the late maturation steps of the functional core of the 30S ribosomal subunit. Associates with free 30S ribosomal subunits (but not with 30S subunits that are part of 70S ribosomes or polysomes). Required for efficient processing of 16S rRNA. May interact with the 5'-terminal helix region of 16S rRNA. In Aeromonas hydrophila subsp. hydrophila (strain ATCC 7966 / DSM 30187 / BCRC 13018 / CCUG 14551 / JCM 1027 / KCTC 2358 / NCIMB 9240 / NCTC 8049), this protein is Ribosome-binding factor A.